We begin with the raw amino-acid sequence, 1053 residues long: LRR receptor-like serine/threonine-protein kinase GHR1 (1053 aa).

A signal peptide spans Met-1 to Gly-18. Residues Gln-19 to Val-630 are Extracellular-facing. LRR repeat units follow at residues Gly-73 to Leu-93, Thr-94 to Ser-119, Gln-121 to Ser-141, Val-142 to Leu-165, Ile-166 to Leu-189, Asp-191 to Leu-212, Ile-213 to Leu-237, Asn-239 to Gly-260, Ser-262 to Leu-285, Phe-286 to Val-309, Tyr-310 to Gly-333, Ser-335 to Ser-357, and Thr-358 to Leu-384. Asn-92 carries N-linked (GlcNAc...) asparagine glycosylation. A phosphoserine; by HT1 mark is found at Ser-100 and Ser-102. Asn-103 carries an N-linked (GlcNAc...) asparagine glycan. Ser-105 and Ser-126 each carry phosphoserine; by HT1. Asn-146 and Asn-153 each carry an N-linked (GlcNAc...) asparagine glycan. The N-linked (GlcNAc...) asparagine glycan is linked to Asn-196. N-linked (GlcNAc...) asparagine glycosylation is present at Asn-239. Ser-262 is subject to Phosphoserine; by HT1. The N-linked (GlcNAc...) asparagine glycan is linked to Asn-269. A Phosphoserine; by HT1 modification is found at Ser-278. Residue Thr-280 is modified to Phosphothreonine; by HT1. Ser-281 is subject to Phosphoserine; by HT1. Ser-325 is modified (phosphoserine; by HT1). N-linked (GlcNAc...) asparagine glycosylation is present at Asn-347. N-linked (GlcNAc...) asparagine glycosylation is present at Asn-394. LRR repeat units follow at residues Trp-401–Leu-425, Leu-426–His-449, Tyr-450–Met-474, Thr-476–Gly-498, Ser-499–Ser-521, Leu-522–Ile-546, Ser-548–Asn-570, and Met-572–Phe-592. Residue Tyr-406 is modified to Phosphotyrosine; by HT1. At Ser-410 the chain carries Phosphoserine; by HT1. Thr-415 is subject to Phosphothreonine; by HT1. Ser-417 carries the post-translational modification Phosphoserine; by HT1. Asn-432 carries an N-linked (GlcNAc...) asparagine glycan. Ser-434 carries the phosphoserine; by HT1 modification. N-linked (GlcNAc...) asparagine glycosylation is found at Asn-534, Asn-566, and Asn-575. Phosphoserine; by HT1 occurs at positions 613, 614, and 616. An N-linked (GlcNAc...) asparagine glycan is attached at Asn-621. The helical transmembrane segment at Val-631–Phe-651 threads the bilayer. Residues Cys-652–Ile-1053 lie on the Cytoplasmic side of the membrane. Residues Arg-662–Arg-671 show a composition bias toward basic and acidic residues. The tract at residues Arg-662 to Met-684 is disordered. Phosphothreonine; by HT1 occurs at positions 669 and 675. Phosphoserine; by HT1 occurs at positions 678, 680, 698, 699, and 700. The residue at position 704 (Ser-704) is a Phosphoserine. Thr-713 is modified (phosphothreonine; by HT1). Ser-716 and Ser-718 each carry phosphoserine; by HT1. Thr-720 carries the phosphothreonine; by HT1 modification. A phosphoserine; by HT1 mark is found at Ser-721, Ser-724, and Ser-760. Thr-764 carries the post-translational modification Phosphothreonine; by HT1. Residue Ser-769 is modified to Phosphoserine; by HT1. One can recognise a Protein kinase domain in the interval Arg-770–Ile-1053. ATP is bound by residues Leu-776–Ser-784 and Lys-798. A phosphothreonine; by HT1 mark is found at Thr-928 and Thr-1010. A Phosphoserine; by HT1 modification is found at Ser-1015. Thr-1045 carries the post-translational modification Phosphothreonine; by HT1. Tyr-1047 carries the phosphotyrosine; by HT1 modification. A phosphoserine; by HT1 mark is found at Ser-1051 and Ser-1052.

This sequence belongs to the protein kinase superfamily. Ser/Thr protein kinase family. In terms of assembly, interacts with SLAC1 (via N-terminus). Binds to ABI2, but not ABI1. Interacts with CPK3. Phosphorylated by HT1; this phosphorylation is inhibited by MPK12 and MPK4. As to expression, expressed in guard cells and in the vasculature of roots and leaves.

Its subcellular location is the cell membrane. The catalysed reaction is L-seryl-[protein] + ATP = O-phospho-L-seryl-[protein] + ADP + H(+). It catalyses the reaction L-threonyl-[protein] + ATP = O-phospho-L-threonyl-[protein] + ADP + H(+). With respect to regulation, negatively regulated by ABI2. Its function is as follows. Receptor kinase acting as an early component in abscisic acid (ABA) signaling. Required for darkness, ABA, high CO(2) and hydrogen peroxide (H(2)O(2)) induction of S-type anion currents in guard cells leading to stomatal closure, possibly via the phosphorylation and activation of the anion channel SLAC1 and as a scaffolding component. Seems to act in parallel with SRK2E/OST1 in the ABA signaling pathway which regulates stomatal movement. Binds ATP. Involved in the local and/or systemic stomatal responses (e.g. stomatal closure) to light stress. The chain is LRR receptor-like serine/threonine-protein kinase GHR1 from Arabidopsis thaliana (Mouse-ear cress).